The sequence spans 199 residues: Chorismate pyruvate-lyase (199 aa).

It belongs to the chorismate pyruvate-lyase type 2 family.

It carries out the reaction chorismate = 4-hydroxybenzoate + pyruvate. In terms of biological role, removes the pyruvyl group from chorismate to provide 4-hydroxybenzoate (4HB). Involved in the synthesis of glycosylated p-hydroxybenzoic acid methyl esters (p-HBADs) and phenolic glycolipids (PGL) that play important roles in the pathogenesis of mycobacterial infections. This is Chorismate pyruvate-lyase from Mycobacterium bovis (strain ATCC BAA-935 / AF2122/97).